A 57-amino-acid chain; its full sequence is uncharacterized protein (57 aa).

A helical membrane pass occupies residues 21-37; it reads GTYTLVVAFVLAFLVYS.

Its subcellular location is the host membrane. This is an uncharacterized protein from Human herpesvirus 6B (strain Z29) (HHV-6 variant B).